The sequence spans 186 residues: Ribosome-recycling factor (186 aa).

Positions aspartate 135 to glutamine 162 are disordered.

This sequence belongs to the RRF family.

Its subcellular location is the cytoplasm. Its function is as follows. Responsible for the release of ribosomes from messenger RNA at the termination of protein biosynthesis. May increase the efficiency of translation by recycling ribosomes from one round of translation to another. The polypeptide is Ribosome-recycling factor (Sinorhizobium fredii (strain NBRC 101917 / NGR234)).